The following is a 118-amino-acid chain: Large ribosomal subunit protein bL20 (118 aa).

Belongs to the bacterial ribosomal protein bL20 family.

Its function is as follows. Binds directly to 23S ribosomal RNA and is necessary for the in vitro assembly process of the 50S ribosomal subunit. It is not involved in the protein synthesizing functions of that subunit. This Serratia proteamaculans (strain 568) protein is Large ribosomal subunit protein bL20.